The chain runs to 677 residues: Mitochondrial disaggregase (677 aa).

Residues 1 to 57 constitute a mitochondrion transit peptide; it reads MMLSAVLRRTAPAPRLFLGLIKSPSLQSRGGAYNRSVITGDRGEPQRLRTAAWVRPG. The tract at residues 64-103 is disordered; it reads PGRGAATGGRRGERTEIPYLTAASSGRGPSPEETLPGQDS. The autoinhibitory stretch occupies residues 92 to 126; it reads PSPEETLPGQDSWNGVPNKAGLGMWALAMALVVQC. ANK repeat units follow at residues 133–162, 166–195, 235–265, and 268–297; these read NKDA…DVNA, LGWT…DPNL, KGCT…PLQR, and MGHT…EKQR. Histidine 316, isoleucine 318, serine 353, glycine 354, isoleucine 355, glycine 356, lysine 357, threonine 358, glutamate 425, and asparagine 466 together coordinate ATP. Residues 477 to 505 are regulatory; slows ATPase and disaggregase activities; the sequence is LQLRQEALEMSRNRIAENLGDVQISDKIT. Position 531 (arginine 531) interacts with ATP. Lysine 559 is modified (N6-acetyllysine). Arginine 590 is an ATP binding site.

It belongs to the ClpA/ClpB family. As to quaternary structure, homododecamer when substrate-bound; the homododecamer consists of 2 homohexamers stacked head-to-head via ANK repeat-mediated interactions. The active substrate-bound form is likely to exist in a dynamic equilibrium between homohexamers and homododecamers. Homotetradecamer in the unbound state which is remodeled upon substrate binding into the homododecamer. Interacts with PHB and PHB2. Interacts with MAVS; the interaction is enhanced by Sendai virus infection. In terms of processing, proteolytically cleaved by protease PARL. ATP-dependent protein disaggregase activity is stimulated by PARL-mediated cleavage of the N-terminal autoinhibitory peptide.

It is found in the mitochondrion intermembrane space. The enzyme catalyses ATP + H2O = ADP + phosphate + H(+). With respect to regulation, disaggregase activity is inhibited by ADP. Its function is as follows. Functions as a regulatory ATPase and participates in secretion/protein trafficking process. Has ATP-dependent protein disaggregase activity and is required to maintain the solubility of key mitochondrial proteins. Involved in mitochondrial-mediated antiviral innate immunity, activates RIG-I-mediated signal transduction and production of IFNB1 and pro-inflammatory cytokine IL6. Plays a role in granulocyte differentiation. The chain is Mitochondrial disaggregase from Rattus norvegicus (Rat).